Consider the following 262-residue polypeptide: MHTLTAAIEMDKLDANLEQQFDLNLIEAVKLNPVIYDRSHYNYKHFVRKAQTWKQIAETLGVPEQKCTKRWKSLRDKFAREMKLCQESRWRYFKQMQFLVDSIRQYRESLLGKCANGSQSANQVADPSQQQQAQQQTVVDIFAQPFNGSATTSAQALTHPHEITVTSDAQLATAVGKDQKPYFYEPPLKRERSEEEHSDNMLNTIKIFQNNVSQAVSAEDQSFGMVVTDMLNTLGVRQKAEAKVHIIKYLTDMQLLAQHNKY.

The MADF DNA-binding region spans 24-104 (NLIEAVKLNP…QMQFLVDSIR (81 aa)). Residues 217-256 (SAEDQSFGMVVTDMLNTLGVRQKAEAKVHIIKYLTDMQLL) form the BESS domain.

O-glycosylated; contains N-acetylglucosamine side chains.

It localises to the nucleus. In terms of biological role, may play an important role not only in the regulation of Adh expression but also in the transcription of other genes. In Drosophila melanogaster (Fruit fly), this protein is Transcription factor Adf-1 (Adf1).